Consider the following 40-residue polypeptide: Photosystem II reaction center protein L (40 aa).

Residues 19-39 (SLFLGLLLVFVLGILFSSYFF) form a helical membrane-spanning segment.

It belongs to the PsbL family. In terms of assembly, PSII is composed of 1 copy each of membrane proteins PsbA, PsbB, PsbC, PsbD, PsbE, PsbF, PsbH, PsbI, PsbJ, PsbK, PsbL, PsbM, PsbT, PsbX, PsbY, PsbZ, Psb30/Ycf12, peripheral proteins PsbO, CyanoQ (PsbQ), PsbU, PsbV and a large number of cofactors. It forms dimeric complexes.

The protein resides in the cellular thylakoid membrane. Functionally, one of the components of the core complex of photosystem II (PSII). PSII is a light-driven water:plastoquinone oxidoreductase that uses light energy to abstract electrons from H(2)O, generating O(2) and a proton gradient subsequently used for ATP formation. It consists of a core antenna complex that captures photons, and an electron transfer chain that converts photonic excitation into a charge separation. This subunit is found at the monomer-monomer interface and is required for correct PSII assembly and/or dimerization. The sequence is that of Photosystem II reaction center protein L from Synechococcus elongatus (strain ATCC 33912 / PCC 7942 / FACHB-805) (Anacystis nidulans R2).